The following is a 255-amino-acid chain: Ditrans,polycis-undecaprenyl-diphosphate synthase ((2E,6E)-farnesyl-diphosphate specific) (255 aa).

Residue aspartate 21 is part of the active site. A Mg(2+)-binding site is contributed by aspartate 21. Residues 22-25 (GNGR), tryptophan 26, arginine 34, histidine 38, and 66-68 (SSE) contribute to the substrate site. Asparagine 69 (proton acceptor) is an active-site residue. Residues tryptophan 70, arginine 72, arginine 189, and 195-197 (RIS) each bind substrate. Glutamate 208 provides a ligand contact to Mg(2+).

This sequence belongs to the UPP synthase family. As to quaternary structure, homodimer. Mg(2+) serves as cofactor.

The catalysed reaction is 8 isopentenyl diphosphate + (2E,6E)-farnesyl diphosphate = di-trans,octa-cis-undecaprenyl diphosphate + 8 diphosphate. In terms of biological role, catalyzes the sequential condensation of isopentenyl diphosphate (IPP) with (2E,6E)-farnesyl diphosphate (E,E-FPP) to yield (2Z,6Z,10Z,14Z,18Z,22Z,26Z,30Z,34E,38E)-undecaprenyl diphosphate (di-trans,octa-cis-UPP). UPP is the precursor of glycosyl carrier lipid in the biosynthesis of bacterial cell wall polysaccharide components such as peptidoglycan and lipopolysaccharide. In Xylella fastidiosa (strain 9a5c), this protein is Ditrans,polycis-undecaprenyl-diphosphate synthase ((2E,6E)-farnesyl-diphosphate specific).